The sequence spans 124 residues: uncharacterized protein (124 aa).

The next 3 membrane-spanning stretches (helical) occupy residues 14–34, 41–61, and 85–105; these read KAIV…YGWQ, FSYG…IIFY, and MVFI…AFFV.

The protein resides in the cell membrane. This is an uncharacterized protein from Haemophilus influenzae (strain ATCC 51907 / DSM 11121 / KW20 / Rd).